A 175-amino-acid polypeptide reads, in one-letter code: Shikimate kinase (175 aa).

14-19 (GAGKST) contributes to the ATP binding site. Ser-18 is a Mg(2+) binding site. The substrate site is built by Asp-36, Arg-60, and Gly-82. Arg-120 contacts ATP. Residue Arg-140 participates in substrate binding. Residue Gln-157 participates in ATP binding.

Belongs to the shikimate kinase family. Monomer. Requires Mg(2+) as cofactor.

It is found in the cytoplasm. It carries out the reaction shikimate + ATP = 3-phosphoshikimate + ADP + H(+). The protein operates within metabolic intermediate biosynthesis; chorismate biosynthesis; chorismate from D-erythrose 4-phosphate and phosphoenolpyruvate: step 5/7. In terms of biological role, catalyzes the specific phosphorylation of the 3-hydroxyl group of shikimic acid using ATP as a cosubstrate. In Histophilus somni (strain 2336) (Haemophilus somnus), this protein is Shikimate kinase.